Consider the following 890-residue polypeptide: Protein translocase subunit SecA (890 aa).

ATP contacts are provided by residues Gln-85, 103 to 107, and Asp-491; that span reads GEGKT.

Belongs to the SecA family. In terms of assembly, monomer and homodimer. Part of the essential Sec protein translocation apparatus which comprises SecA, SecYEG and auxiliary proteins SecDF. Other proteins may also be involved.

Its subcellular location is the cell membrane. The protein resides in the cytoplasm. It catalyses the reaction ATP + H2O + cellular proteinSide 1 = ADP + phosphate + cellular proteinSide 2.. Part of the Sec protein translocase complex. Interacts with the SecYEG preprotein conducting channel. Has a central role in coupling the hydrolysis of ATP to the transfer of proteins into and across the cell membrane, serving as an ATP-driven molecular motor driving the stepwise translocation of polypeptide chains across the membrane. This chain is Protein translocase subunit SecA, found in Mycoplasmoides gallisepticum (strain R(low / passage 15 / clone 2)) (Mycoplasma gallisepticum).